Here is a 156-residue protein sequence, read N- to C-terminus: MSLVPSFFGGRRTNVFDPFSLDVWDPFEGFLTPGLTNAPAKDVAAFTNAKVDWRETPEAHVFKADVPGLKKEEVKVEVEDGNILQISGERSSENEEKSDTWHRVERSSGKFMRRFRLPENAKVEEVKASMENGVLSVTVPKVQESKPEVKSVDISG.

Positions 42–156 constitute a sHSP domain; sequence DVAAFTNAKV…PEVKSVDISG (115 aa).

It belongs to the small heat shock protein (HSP20) family. As to quaternary structure, may form oligomeric structures. Binds to AKR2A.

It localises to the cytoplasm. This is 17.4 kDa class I heat shock protein (HSP17.4A) from Arabidopsis thaliana (Mouse-ear cress).